The sequence spans 286 residues: Phosphatidylglycerol--prolipoprotein diacylglyceryl transferase (286 aa).

The next 7 helical transmembrane spans lie at 29–49, 66–86, 101–121, 130–150, 181–201, 209–229, and 250–270; these read IHWYGLMYLFGFILCWAVGTY, LVFYVAMGVVLGGRCGYVFFY, VWEGGMSFHGGLLGVILAMML, FLDLMDFVAPLVPIGLGLGRI, PSQLYQAALEGLVLFAVLFWF, AAVASLFLILYGCFRFAVEFV, and LSLPMIIIGALIFFYAYRHPA. Arginine 149 is an a 1,2-diacyl-sn-glycero-3-phospho-(1'-sn-glycerol) binding site.

It belongs to the Lgt family.

It is found in the cell inner membrane. The enzyme catalyses L-cysteinyl-[prolipoprotein] + a 1,2-diacyl-sn-glycero-3-phospho-(1'-sn-glycerol) = an S-1,2-diacyl-sn-glyceryl-L-cysteinyl-[prolipoprotein] + sn-glycerol 1-phosphate + H(+). It participates in protein modification; lipoprotein biosynthesis (diacylglyceryl transfer). In terms of biological role, catalyzes the transfer of the diacylglyceryl group from phosphatidylglycerol to the sulfhydryl group of the N-terminal cysteine of a prolipoprotein, the first step in the formation of mature lipoproteins. The polypeptide is Phosphatidylglycerol--prolipoprotein diacylglyceryl transferase (Teredinibacter turnerae (strain ATCC 39867 / T7901)).